A 326-amino-acid polypeptide reads, in one-letter code: MSFSDRNDSPETPESSGTGTPVNSNRASASYITNMWTGLIRRFSSEGSFPSQADTAYDDNFNYHDGNGHNTKDGINGVFSPVRRTASPMRPPPLDPLILHGYRQGTPSSAKLLSAAVAEEIRTMVPERLRIVDDWNLIYSLEQDGASLATLYQRCRQFEGKRAGFVLVVKDLEGGVFGAYLSEYPHPAHTYFGNGECFLWRASNITPLPPPPSADTTNLNSRNTTLAPPPPSSEANTPTHSRPASPTPSEAVRFKAFPYSGLNDFCINCETGFLSVGSGGGHYGLWLDNGLEVGHSSRCETYGNEPLSDEGTKFGVIGVELWVMGV.

Disordered regions lie at residues 1–26 (MSFS…NSNR) and 209–249 (PPPP…PTPS). Polar residues-rich tracts occupy residues 10–26 (PETP…NSNR), 214–226 (ADTT…NTTL), and 233–248 (SEAN…SPTP). Residues 111–325 (KLLSAAVAEE…VIGVELWVMG (215 aa)) form the TLDc domain.

Belongs to the OXR1 family.

It localises to the mitochondrion. Functionally, may be involved in protection from oxidative damage. The chain is Oxidation resistance protein 1 (OXR1) from Gibberella zeae (strain ATCC MYA-4620 / CBS 123657 / FGSC 9075 / NRRL 31084 / PH-1) (Wheat head blight fungus).